The chain runs to 461 residues: D-phenylhydantoinase (461 aa).

Residues histidine 59, histidine 61, and lysine 151 each coordinate a divalent metal cation. Lysine 151 bears the N6-carboxylysine mark. Tyrosine 156 contacts substrate. Histidine 182 and histidine 239 together coordinate a divalent metal cation. Serine 286 serves as a coordination point for substrate. A divalent metal cation is bound at residue aspartate 313. Asparagine 335 serves as a coordination point for substrate.

This sequence belongs to the metallo-dependent hydrolases superfamily. Hydantoinase/dihydropyrimidinase family. Homotetramer. A divalent metal cation is required as a cofactor. In terms of processing, carboxylation allows a single lysine to coordinate two divalent metal cations.

It catalyses the reaction D-5-phenylhydantoin + H2O = N-carbamoyl-D-phenylglycine + H(+). Functionally, catalyzes the stereospecific hydrolysis of the cyclic amide bond of D-hydantoin derivatives with an aromatic side chains at the 5'-position. Has no activity on dihydropyrimidines. The physiological function is unknown. The sequence is that of D-phenylhydantoinase from Escherichia coli (strain SE11).